Here is a 148-residue protein sequence, read N- to C-terminus: UPF0134 protein MPN_410 (148 aa).

This sequence belongs to the UPF0134 family.

This is UPF0134 protein MPN_410 from Mycoplasma pneumoniae (strain ATCC 29342 / M129 / Subtype 1) (Mycoplasmoides pneumoniae).